Reading from the N-terminus, the 463-residue chain is Siroheme synthase 1 (463 aa).

Positions 1-203 (MDFLPLFCQL…GQQQAAEESV (203 aa)) are precorrin-2 dehydrogenase /sirohydrochlorin ferrochelatase. Residues 22 to 23 (EV) and 43 to 44 (PH) each bind NAD(+). Phosphoserine is present on Ser128. The uroporphyrinogen-III C-methyltransferase stretch occupies residues 215-463 (GSVTLVGAGP…YGEANTLAGV (249 aa)). Pro224 is an S-adenosyl-L-methionine binding site. Catalysis depends on Asp247, which acts as the Proton acceptor. Lys269 functions as the Proton donor in the catalytic mechanism. S-adenosyl-L-methionine-binding positions include 300–302 (GGD), Ile305, 330–331 (TA), Met382, and Gly411.

This sequence in the N-terminal section; belongs to the precorrin-2 dehydrogenase / sirohydrochlorin ferrochelatase family. In the C-terminal section; belongs to the precorrin methyltransferase family.

The catalysed reaction is uroporphyrinogen III + 2 S-adenosyl-L-methionine = precorrin-2 + 2 S-adenosyl-L-homocysteine + H(+). It carries out the reaction precorrin-2 + NAD(+) = sirohydrochlorin + NADH + 2 H(+). The enzyme catalyses siroheme + 2 H(+) = sirohydrochlorin + Fe(2+). It functions in the pathway cofactor biosynthesis; adenosylcobalamin biosynthesis; precorrin-2 from uroporphyrinogen III: step 1/1. Its pathway is cofactor biosynthesis; adenosylcobalamin biosynthesis; sirohydrochlorin from precorrin-2: step 1/1. The protein operates within porphyrin-containing compound metabolism; siroheme biosynthesis; precorrin-2 from uroporphyrinogen III: step 1/1. It participates in porphyrin-containing compound metabolism; siroheme biosynthesis; siroheme from sirohydrochlorin: step 1/1. It functions in the pathway porphyrin-containing compound metabolism; siroheme biosynthesis; sirohydrochlorin from precorrin-2: step 1/1. Multifunctional enzyme that catalyzes the SAM-dependent methylations of uroporphyrinogen III at position C-2 and C-7 to form precorrin-2 via precorrin-1. Then it catalyzes the NAD-dependent ring dehydrogenation of precorrin-2 to yield sirohydrochlorin. Finally, it catalyzes the ferrochelation of sirohydrochlorin to yield siroheme. The chain is Siroheme synthase 1 from Aeromonas hydrophila subsp. hydrophila (strain ATCC 7966 / DSM 30187 / BCRC 13018 / CCUG 14551 / JCM 1027 / KCTC 2358 / NCIMB 9240 / NCTC 8049).